A 255-amino-acid polypeptide reads, in one-letter code: uncharacterized protein (255 aa).

This sequence belongs to the IIV-6 155L family.

This is an uncharacterized protein from Acheta domesticus (House cricket).